Here is a 205-residue protein sequence, read N- to C-terminus: ATP-dependent dethiobiotin synthetase BioD (205 aa).

T16 lines the Mg(2+) pocket. K32 is a catalytic residue. T36 contributes to the substrate binding site. E97 contributes to the Mg(2+) binding site. An ATP-binding site is contributed by 97-100 (EGAG).

The protein belongs to the dethiobiotin synthetase family. In terms of assembly, homodimer. Mg(2+) serves as cofactor.

It is found in the cytoplasm. The catalysed reaction is (7R,8S)-7,8-diammoniononanoate + CO2 + ATP = (4R,5S)-dethiobiotin + ADP + phosphate + 3 H(+). It participates in cofactor biosynthesis; biotin biosynthesis; biotin from 7,8-diaminononanoate: step 1/2. In terms of biological role, catalyzes a mechanistically unusual reaction, the ATP-dependent insertion of CO2 between the N7 and N8 nitrogen atoms of 7,8-diaminopelargonic acid (DAPA, also called 7,8-diammoniononanoate) to form a ureido ring. The sequence is that of ATP-dependent dethiobiotin synthetase BioD from Paramagnetospirillum magneticum (strain ATCC 700264 / AMB-1) (Magnetospirillum magneticum).